Reading from the N-terminus, the 632-residue chain is Phosphatidylinositol-3,5-bisphosphate 3-phosphatase MTMR8 (632 aa).

The 375-residue stretch at 126 to 500 (GWELISVVND…LHFKFWCGMY (375 aa)) folds into the Myotubularin phosphatase domain. A 1,2-diacyl-sn-glycero-3-phospho-(1D-myo-inositol-3,5-bisphosphate) is bound by residues N250, N275, and I276. N250, N275, and I276 together coordinate a 1,2-diacyl-sn-glycero-3-phospho-(1D-myo-inositol-3-phosphate). C338 functions as the Phosphocysteine intermediate in the catalytic mechanism. Residues S339, D340, G341, W342, D343, R344, K380, and R384 each coordinate a 1,2-diacyl-sn-glycero-3-phospho-(1D-myo-inositol-3,5-bisphosphate). A 1,2-diacyl-sn-glycero-3-phospho-(1D-myo-inositol-3-phosphate) is bound by residues S339, D340, G341, W342, D343, and R344. S339 and D340 together coordinate phosphate. Phosphate is bound by residues W342, D343, and R344. Residue R384 participates in a 1,2-diacyl-sn-glycero-3-phospho-(1D-myo-inositol-3-phosphate) binding. The segment at 545-632 (LPDPAGPINT…HSKEEVQESS (88 aa)) is disordered. Positions 602 to 632 (EPAANEHDLSSKDKPVFVETEHSKEEVQESS) are enriched in basic and acidic residues.

The protein belongs to the protein-tyrosine phosphatase family. Non-receptor class myotubularin subfamily. As to quaternary structure, homodimer.

Its subcellular location is the nucleus envelope. It catalyses the reaction a 1,2-diacyl-sn-glycero-3-phospho-(1D-myo-inositol-3,5-bisphosphate) + H2O = a 1,2-diacyl-sn-glycero-3-phospho-(1D-myo-inositol-5-phosphate) + phosphate. The enzyme catalyses a 1,2-diacyl-sn-glycero-3-phospho-(1D-myo-inositol-3-phosphate) + H2O = a 1,2-diacyl-sn-glycero-3-phospho-(1D-myo-inositol) + phosphate. The catalysed reaction is 1,2-dioctanoyl-sn-glycero-3-phospho-(1D-myo-inositol-3,5-bisphosphate) + H2O = 1,2-dioctanoyl-sn-glycero-3-phospho-(1D-myo-inositol-5-phosphate) + phosphate. Functionally, lipid phosphatase that specifically dephosphorylates the D-3 position of phosphatidylinositol 3-phosphate and phosphatidylinositol 3,5-bisphosphate, generating phosphatidylinositol and phosphatidylinositol 5-phosphate. In Danio rerio (Zebrafish), this protein is Phosphatidylinositol-3,5-bisphosphate 3-phosphatase MTMR8 (mtmr8).